Reading from the N-terminus, the 103-residue chain is Small ribosomal subunit protein uS10 (103 aa).

It belongs to the universal ribosomal protein uS10 family. In terms of assembly, part of the 30S ribosomal subunit.

Involved in the binding of tRNA to the ribosomes. The protein is Small ribosomal subunit protein uS10 of Jannaschia sp. (strain CCS1).